Here is a 792-residue protein sequence, read N- to C-terminus: Probable G-protein coupled receptor 156 (792 aa).

Over Met-1–Leu-49 the chain is Extracellular. N-linked (GlcNAc...) asparagine glycosylation occurs at Asn-6. Residues Leu-50–Phe-70 form a helical membrane-spanning segment. Residues Thr-71–Asn-86 are Cytoplasmic-facing. Residues Leu-87–Ile-107 traverse the membrane as a helical segment. At Gln-108–Ala-118 the chain is on the extracellular side. A helical transmembrane segment spans residues Leu-119–Leu-139. Topologically, residues Gly-140–Gln-164 are cytoplasmic. A helical membrane pass occupies residues Leu-165 to Leu-185. Residues Thr-186–Asp-222 are Extracellular-facing. The chain crosses the membrane as a helical span at residues Val-223–Ala-243. At Gly-244–Ser-257 the chain is on the cytoplasmic side. The helical transmembrane segment at Leu-258 to Thr-278 threads the bilayer. Topologically, residues Arg-279 to Leu-287 are extracellular. A helical membrane pass occupies residues Val-288–Phe-308. Over Leu-309 to Val-792 the chain is Cytoplasmic. Residues Glu-354–Glu-390 adopt a coiled-coil conformation. 3 disordered regions span residues Gly-407–Met-457, Gly-469–Pro-516, and Asp-538–Pro-704. The span at Ala-422–Ser-434 shows a compositional bias: low complexity. 2 stretches are compositionally biased toward basic and acidic residues: residues Ser-443 to Met-457 and Pro-474 to Asn-486. Over residues Pro-554–Ser-567 the composition is skewed to polar residues. Over residues Val-578–Ser-589 the composition is skewed to basic residues. Residues Gln-602–Arg-619 are compositionally biased toward polar residues. The segment covering Asp-620–Arg-635 has biased composition (basic and acidic residues). Positions Pro-675–Pro-704 are enriched in low complexity.

This sequence belongs to the G-protein coupled receptor 3 family. GABA-B receptor subfamily. Widely expressed throughout the brain and is particularly dense in the olfactory tubercles, islands of Calleja, nucleus accumbens, piriform cortex and all fields of the hippocampus.

Its subcellular location is the cell membrane. Functionally, orphan G-protein coupled receptor involved in the regulation of hair cell orientation in mechanosensory organs of the inner ear. It is required to trigger a 180 degree reversal in hair cell orientation, creating a virtual line of polarity reversal (LPR) across which stereociliary bundles are arranged in opposite orientations. This chain is Probable G-protein coupled receptor 156 (Gpr156), found in Rattus norvegicus (Rat).